The chain runs to 524 residues: Bifunctional purine biosynthesis protein PurH (524 aa).

The MGS-like domain maps to 1–145; that stretch reads MIQQALLSVS…KNHRDVTVIV (145 aa).

It belongs to the PurH family.

The enzyme catalyses (6R)-10-formyltetrahydrofolate + 5-amino-1-(5-phospho-beta-D-ribosyl)imidazole-4-carboxamide = 5-formamido-1-(5-phospho-D-ribosyl)imidazole-4-carboxamide + (6S)-5,6,7,8-tetrahydrofolate. It carries out the reaction IMP + H2O = 5-formamido-1-(5-phospho-D-ribosyl)imidazole-4-carboxamide. The protein operates within purine metabolism; IMP biosynthesis via de novo pathway; 5-formamido-1-(5-phospho-D-ribosyl)imidazole-4-carboxamide from 5-amino-1-(5-phospho-D-ribosyl)imidazole-4-carboxamide (10-formyl THF route): step 1/1. It functions in the pathway purine metabolism; IMP biosynthesis via de novo pathway; IMP from 5-formamido-1-(5-phospho-D-ribosyl)imidazole-4-carboxamide: step 1/1. The sequence is that of Bifunctional purine biosynthesis protein PurH from Ralstonia nicotianae (strain ATCC BAA-1114 / GMI1000) (Ralstonia solanacearum).